Reading from the N-terminus, the 308-residue chain is Glutaminase (308 aa).

7 residues coordinate substrate: Ser66, Asn117, Glu161, Asn168, Tyr192, Tyr244, and Val262.

The protein belongs to the glutaminase family. In terms of assembly, homotetramer.

The catalysed reaction is L-glutamine + H2O = L-glutamate + NH4(+). This chain is Glutaminase, found in Enterobacter sp. (strain 638).